Reading from the N-terminus, the 449-residue chain is L-seryl-tRNA(Sec) selenium transferase (449 aa).

The residue at position 286 (lysine 286) is an N6-(pyridoxal phosphate)lysine.

The protein belongs to the SelA family. Pyridoxal 5'-phosphate is required as a cofactor.

It is found in the cytoplasm. It carries out the reaction L-seryl-tRNA(Sec) + selenophosphate + H(+) = L-selenocysteinyl-tRNA(Sec) + phosphate. The protein operates within aminoacyl-tRNA biosynthesis; selenocysteinyl-tRNA(Sec) biosynthesis; selenocysteinyl-tRNA(Sec) from L-seryl-tRNA(Sec) (bacterial route): step 1/1. In terms of biological role, converts seryl-tRNA(Sec) to selenocysteinyl-tRNA(Sec) required for selenoprotein biosynthesis. The chain is L-seryl-tRNA(Sec) selenium transferase from Sulfurimonas denitrificans (strain ATCC 33889 / DSM 1251) (Thiomicrospira denitrificans (strain ATCC 33889 / DSM 1251)).